The following is a 495-amino-acid chain: B3 domain-containing protein Os01g0234100 (495 aa).

Disordered stretches follow at residues methionine 1 to glutamine 25 and proline 88 to glutamate 108. The span at glutamine 92 to glutamate 108 shows a compositional bias: polar residues. Residues phenylalanine 152 to lysine 243 constitute a DNA-binding region (TF-B3). A compositionally biased stretch (basic and acidic residues) spans glutamate 268–threonine 282. The disordered stretch occupies residues glutamate 268 to valine 289.

It is found in the nucleus. The polypeptide is B3 domain-containing protein Os01g0234100 (Oryza sativa subsp. japonica (Rice)).